The sequence spans 239 residues: MELKDILKEGAQGLNIEITDAQINQLIKYKDILLEWNQKMNLTAIEEEKDVMIKHFLDSLSCIQSKYLKREGKMIDVGTGAGFPGVPLKIALPGIELTLLDSLRKRISFLEEVCAETKLGQVDFVHGRAEDIGQSKDYREKYDYAVSRAVAALNVLVEYCLPFVKVGGYFICQKGPQIIEELPDAEKAIKVLGGEVVEQISVDLPFSDITHHILVIKKIKQTPSKYPRKAGKPSKEPIK.

S-adenosyl-L-methionine contacts are provided by residues G78, F83, 129 to 130, and R148; that span reads AE.

Belongs to the methyltransferase superfamily. RNA methyltransferase RsmG family.

The protein localises to the cytoplasm. Its function is as follows. Specifically methylates the N7 position of a guanine in 16S rRNA. The chain is Ribosomal RNA small subunit methyltransferase G from Alkaliphilus oremlandii (strain OhILAs) (Clostridium oremlandii (strain OhILAs)).